The following is a 155-amino-acid chain: Small ribosomal subunit protein uS7c (155 aa).

This sequence belongs to the universal ribosomal protein uS7 family. As to quaternary structure, part of the 30S ribosomal subunit.

It is found in the plastid. The protein localises to the chloroplast. Its function is as follows. One of the primary rRNA binding proteins, it binds directly to 16S rRNA where it nucleates assembly of the head domain of the 30S subunit. This is Small ribosomal subunit protein uS7c (rps7) from Hydrastis canadensis (Goldenseal).